Reading from the N-terminus, the 360-residue chain is Phospho-N-acetylmuramoyl-pentapeptide-transferase (360 aa).

10 consecutive transmembrane segments (helical) span residues 25 to 45 (RTIYASLTALVISFVLGPWLI), 73 to 93 (TMGGVLIMSAVMFSTLLWADL), 94 to 114 (TNAYVWIALGVTFGFGLIGFV), 134 to 154 (FCLQVVVAGIAGTVLVYGLNG), 173 to 193 (PGYVLFAILVMVGASNAVNLT), 198 to 218 (GLAIVPVAIAAGTYMIFAYVA), 240 to 260 (VFCGALVGAGLGFLWYNAYPA), 262 to 282 (IFMGDVGSLPLGGALGVVAIL), 287 to 307 (LALVIVGGLFVMEAVSVILQV), and 337 to 357 (KVIVRFWIIAIMLALLSVSTL).

Belongs to the glycosyltransferase 4 family. MraY subfamily. Mg(2+) is required as a cofactor.

Its subcellular location is the cell inner membrane. It carries out the reaction UDP-N-acetyl-alpha-D-muramoyl-L-alanyl-gamma-D-glutamyl-meso-2,6-diaminopimeloyl-D-alanyl-D-alanine + di-trans,octa-cis-undecaprenyl phosphate = di-trans,octa-cis-undecaprenyl diphospho-N-acetyl-alpha-D-muramoyl-L-alanyl-D-glutamyl-meso-2,6-diaminopimeloyl-D-alanyl-D-alanine + UMP. Its pathway is cell wall biogenesis; peptidoglycan biosynthesis. Its function is as follows. Catalyzes the initial step of the lipid cycle reactions in the biosynthesis of the cell wall peptidoglycan: transfers peptidoglycan precursor phospho-MurNAc-pentapeptide from UDP-MurNAc-pentapeptide onto the lipid carrier undecaprenyl phosphate, yielding undecaprenyl-pyrophosphoryl-MurNAc-pentapeptide, known as lipid I. This Desulfatibacillum aliphaticivorans protein is Phospho-N-acetylmuramoyl-pentapeptide-transferase.